The sequence spans 354 residues: Probable L-ascorbate-6-phosphate lactonase UlaG (354 aa).

This sequence belongs to the UlaG family. A divalent metal cation serves as cofactor.

It is found in the cytoplasm. It catalyses the reaction L-ascorbate 6-phosphate + H2O = 3-dehydro-L-gulonate 6-phosphate. It participates in cofactor degradation; L-ascorbate degradation; D-xylulose 5-phosphate from L-ascorbate: step 1/4. In terms of biological role, probably catalyzes the hydrolysis of L-ascorbate-6-P into 3-keto-L-gulonate-6-P. Is essential for L-ascorbate utilization under anaerobic conditions. This chain is Probable L-ascorbate-6-phosphate lactonase UlaG, found in Shigella boydii serotype 4 (strain Sb227).